The chain runs to 104 residues: Histone-like protein p6 (104 aa).

A DNA-binding region spans residues 1 to 19 (MAKMMQREITKTTVNVAKM). The disordered stretch occupies residues 85–104 (VEKDEDQEEQTEAPEEQVAE). A compositionally biased stretch (acidic residues) spans 88-104 (DEDQEEQTEAPEEQVAE).

The protein belongs to the phi29likevirus histone-like protein p6 family. In terms of assembly, homodimer. Homomultimer. Binds to double-stranded DNA giving rise to multimeric nucleoprotein complexes. Binding specificity for the viral DNA is based on supercoiling, the viral genome having a negative superhelicity lower than that of plasmid DNA. Interacts with the DNA replication protein p17; this interaction optimizes the binding of protein p6 at the viral DNA ends, thus favoring the initiation of replication. Interacts with the late genes activator p4 (via C-terminus).

In terms of biological role, histone-like nucleoprotein that binds to the viral dsDNA and responsible for wrapping and compacting the viral DNA about 4-fold. Forms a nucleoprotein complex in which the DNA adopts a right-handed toroidal conformation winding around a protein core. Binds ito most, if not all, the viral genome, although with different affinity, the highest one corresponding to the genome ends. The formation of the nucleoprotein complex at the genome ends, activates the initiation of viral DNA replication. The binding of p6 would recruit the complex formed by the TP and the DNA polymerase to the origin. Protein p6 also represses early transcription from promoter C2, and, together with protein p4, represses transcription from promoters A2b and A2c and activates late transcription from promoter A3. Protein p6 is therefore involved in the early to late transcription switch. The formation of the nucleoprotein complex at the right end of the phage genome where the early promoter C2 is located affects local topology, which may contribute to the promoter repression. This is Histone-like protein p6 (6) from Bacillus subtilis (Bacteriophage phi-29).